The primary structure comprises 493 residues: Tripartite motif-containing protein 5 (493 aa).

An N-acetylalanine modification is found at Ala-2. Residues 15–58 form an RING-type zinc finger; sequence CPICLELLTQPLSLDCGHSFCQACLTANHKTSMPDGERSCPVCR. A Phosphoserine modification is found at Ser-85. The B box-type zinc finger occupies 90–131; sequence QKVDHCARHGEKLLLFCREDRKVICWLCERSQEHRGHHTFLM. Zn(2+) contacts are provided by Cys-95, His-98, Cys-117, and His-123. Residues 130-240 adopt a coiled-coil conformation; it reads LMEEVAQEYQ…LISDLEHRLQ (111 aa). The required for interaction with GABARAP and for autophagy stretch occupies residues 185-198; that stretch reads FEQLRHILDWVESN. Positions 281–493 constitute a B30.2/SPRY domain; sequence LQVTLEVLRE…VPMTLCSPSS (213 aa).

It belongs to the TRIM/RBCC family. Can form homodimers and homotrimers. In addition to lower-order dimerization, also exhibits a higher-order multimerization and both low- and high-order multimerizations are essential for its restriction activity. Interacts with BTBD1 and BTBD2. Interacts with PSMC4, PSMC5, PSMD7 and HSPA8/HSC70. Interacts (via B30.2/SPRY domain) with HSPA1A/B. Interacts with PSMC2, MAP3K7/TAK1, TAB2 and TAB3. Interacts with SQSTM1. Interacts with TRIM6 and TRIM34. Interacts with ULK1 (phosphorylated form), GABARAP, GABARAPL1, GABARAPL2, MAP1LC3A, MAP1LC3C and BECN1. Post-translationally, degraded in a proteasome-independent fashion in the absence of viral infection but in a proteasome-dependent fashion following exposure to restriction sensitive virus. In terms of processing, autoubiquitinated in a RING finger- and UBE2D2-dependent manner. Monoubiquitinated by TRIM21. Deubiquitinated by Yersinia YopJ. Ubiquitination may not lead to proteasomal degradation.

The protein resides in the cytoplasm. The protein localises to the nucleus. It carries out the reaction S-ubiquitinyl-[E2 ubiquitin-conjugating enzyme]-L-cysteine + [acceptor protein]-L-lysine = [E2 ubiquitin-conjugating enzyme]-L-cysteine + N(6)-ubiquitinyl-[acceptor protein]-L-lysine.. The protein operates within protein modification; protein ubiquitination. Its function is as follows. Capsid-specific restriction factor that prevents infection from non-host-adapted retroviruses. Blocks viral replication early in the life cycle, after viral entry but before reverse transcription. In addition to acting as a capsid-specific restriction factor, also acts as a pattern recognition receptor that activates innate immune signaling in response to the retroviral capsid lattice. Binding to the viral capsid triggers its E3 ubiquitin ligase activity, and in concert with the heterodimeric ubiquitin conjugating enzyme complex UBE2V1-UBE2N (also known as UBC13-UEV1A complex) generates 'Lys-63'-linked polyubiquitin chains, which in turn are catalysts in the autophosphorylation of the MAP3K7/TAK1 complex (includes TAK1, TAB2, and TAB3). Activation of the MAP3K7/TAK1 complex by autophosphorylation results in the induction and expression of NF-kappa-B and MAPK-responsive inflammatory genes, thereby leading to an innate immune response in the infected cell. Plays a role in regulating autophagy through activation of autophagy regulator BECN1 by causing its dissociation from its inhibitors BCL2 and TAB2. This is Tripartite motif-containing protein 5 (TRIM5) from Hylobates lar (Lar gibbon).